The following is a 305-amino-acid chain: Oxygen-dependent coproporphyrinogen-III oxidase (305 aa).

Ser-93 contributes to the substrate binding site. His-97 and His-107 together coordinate a divalent metal cation. Catalysis depends on His-107, which acts as the Proton donor. Residue 109–111 (NVR) participates in substrate binding. 2 residues coordinate a divalent metal cation: His-146 and His-176. The interval 241–276 (YVEFNLVFDRGTLFGLQSGGRTESILMSLPPQVRWG) is important for dimerization. 259–261 (GGR) lines the substrate pocket.

It belongs to the aerobic coproporphyrinogen-III oxidase family. Homodimer. A divalent metal cation is required as a cofactor.

Its subcellular location is the cytoplasm. It catalyses the reaction coproporphyrinogen III + O2 + 2 H(+) = protoporphyrinogen IX + 2 CO2 + 2 H2O. It participates in porphyrin-containing compound metabolism; protoporphyrin-IX biosynthesis; protoporphyrinogen-IX from coproporphyrinogen-III (O2 route): step 1/1. Functionally, involved in the heme biosynthesis. Catalyzes the aerobic oxidative decarboxylation of propionate groups of rings A and B of coproporphyrinogen-III to yield the vinyl groups in protoporphyrinogen-IX. The polypeptide is Oxygen-dependent coproporphyrinogen-III oxidase (Pseudomonas aeruginosa (strain LESB58)).